The following is a 215-amino-acid chain: Polysialic acid O-acetyltransferase (215 aa).

Residues 119-121 (DMH), arginine 148, lysine 154, serine 166, 171-172 (YK), and lysine 190 contribute to the acetyl-CoA site.

It belongs to the transferase hexapeptide repeat family. As to quaternary structure, homotrimer.

The catalysed reaction is [(2-&gt;6)-alpha-D-glucosyl-(1-&gt;4)-N-acetyl-alpha-D-neuraminosyl](n) + n acetyl-CoA = [(2-&gt;6)-alpha-D-glucosyl-(1-&gt;4)-N,7-O-diacetyl-alpha-D-neuraminosyl](n) + n CoA. It catalyses the reaction [(2-&gt;6)-alpha-D-glucosyl-(1-&gt;4)-N-acetyl-alpha-D-neuraminosyl](n) + n acetyl-CoA = [(2-&gt;6)-alpha-D-glucosyl-(1-&gt;4)-N,O(9)-diacetyl-alpha-D-neuraminosyl](n) + n CoA. Functionally, catalyzes the O-acetylation of capsular polymeric sialic acid consisting of polymers of (2-&gt;6)-alpha-D-glucosyl-(1-&gt;4)-N-acetyl-alpha-D-neuraminosyl residues. Shows high substrate specificity toward polymers of sialic acid that contains a large number of residues. This chain is Polysialic acid O-acetyltransferase, found in Neisseria meningitidis.